Consider the following 395-residue polypeptide: D-alanine--D-alanine ligase (395 aa).

The ATP-grasp domain occupies 172–391; sequence KVVLDAAGIP…YTELITRLIE (220 aa). 204–266 lines the ATP pocket; it reads DAGLTYPLFV…EQGIDGREIE (63 aa). The Mg(2+) site is built by Asp-345, Glu-358, and Asn-360.

Belongs to the D-alanine--D-alanine ligase family. It depends on Mg(2+) as a cofactor. The cofactor is Mn(2+).

The protein resides in the cytoplasm. The enzyme catalyses 2 D-alanine + ATP = D-alanyl-D-alanine + ADP + phosphate + H(+). It participates in cell wall biogenesis; peptidoglycan biosynthesis. Cell wall formation. In Bifidobacterium longum (strain DJO10A), this protein is D-alanine--D-alanine ligase.